A 62-amino-acid chain; its full sequence is Large ribosomal subunit protein uL30 (62 aa).

The protein belongs to the universal ribosomal protein uL30 family. As to quaternary structure, part of the 50S ribosomal subunit.

This chain is Large ribosomal subunit protein uL30, found in Halalkalibacterium halodurans (strain ATCC BAA-125 / DSM 18197 / FERM 7344 / JCM 9153 / C-125) (Bacillus halodurans).